The chain runs to 366 residues: tRNA pseudouridine synthase B (366 aa).

The segment at 1 to 55 (MTVTTPDALLAPHDVQHAGADESAAQIRKPRDNNDPRNANRGGGNGKPRRDKRDV) is disordered. D92 functions as the Nucleophile in the catalytic mechanism.

This sequence belongs to the pseudouridine synthase TruB family. Type 1 subfamily.

It catalyses the reaction uridine(55) in tRNA = pseudouridine(55) in tRNA. In terms of biological role, responsible for synthesis of pseudouridine from uracil-55 in the psi GC loop of transfer RNAs. The sequence is that of tRNA pseudouridine synthase B from Rhodopseudomonas palustris (strain ATCC BAA-98 / CGA009).